Here is a 466-residue protein sequence, read N- to C-terminus: 55 kDa erythrocyte membrane protein (466 aa).

T2 is subject to N-acetylthreonine. Phosphoserine occurs at positions 13 and 19. A Phosphothreonine modification is found at T49. 3 positions are modified to phosphoserine: S52, S57, and S110. One can recognise a PDZ domain in the interval 71–152; the sequence is LIQFEKVTEE…MISLKVIPNQ (82 aa). The SH3 domain maps to 158–228; that stretch reads ALQMFMRAQF…PSPELQEWRV (71 aa). S243 is subject to Phosphoserine. Positions 268-466 are interaction with PALS1; it reads VVSYEEVVRL…PQWVPVSWVY (199 aa). A Guanylate kinase-like domain is found at 282 to 451; that stretch reads RKTLVLIGAS…TLKKLQEAFD (170 aa).

It belongs to the MAGUK family. As to quaternary structure, heterodimer with PALS1. Interacts with DLG5 and NF2. Interacts (via guanylate kinase-like domain) with WHRN (via third PDZ domain). In terms of processing, palmitoylated. As to expression, ubiquitous.

It is found in the cell membrane. Its subcellular location is the cell projection. It localises to the stereocilium. Essential regulator of neutrophil polarity. Regulates neutrophil polarization by regulating AKT1 phosphorylation through a mechanism that is independent of PIK3CG activity. In Homo sapiens (Human), this protein is 55 kDa erythrocyte membrane protein (MPP1).